Reading from the N-terminus, the 418-residue chain is Outer membrane protein assembly factor BamB (418 aa).

Residues 1-28 form the signal peptide; it reads MFHNTCGRKGRFARAMGMALAISVTLSG. A lipid anchor (N-palmitoyl cysteine) is attached at Cys-29. Cys-29 carries the S-diacylglycerol cysteine lipid modification.

It belongs to the BamB family. Part of the Bam complex.

The protein resides in the cell outer membrane. Its function is as follows. Part of the outer membrane protein assembly complex, which is involved in assembly and insertion of beta-barrel proteins into the outer membrane. The polypeptide is Outer membrane protein assembly factor BamB (Alteromonas naphthalenivorans).